We begin with the raw amino-acid sequence, 96 residues long: Evasin P1100 (96 aa).

The first 28 residues, 1–28 (MAFNVITFLQFSVFVVILFNINLHSASA), serve as a signal peptide directing secretion. 3 cysteine pairs are disulfide-bonded: Cys-48–Cys-67, Cys-52–Cys-69, and Cys-63–Cys-80. The N-linked (GlcNAc...) asparagine glycan is linked to Asn-51. The N-linked (GlcNAc...) asparagine glycan is linked to Asn-74.

The protein resides in the secreted. Salivary chemokine-binding protein which binds to host chemokines CXCL1, CXCL2, CXCL3, CXCL5, CXCL6, CXCL10, CXCL11 and CXCL13. This is Evasin P1100 from Ixodes ricinus (Common tick).